We begin with the raw amino-acid sequence, 670 residues long: NADH-ubiquinone oxidoreductase chain 5 (670 aa).

The next 15 membrane-spanning stretches (helical) occupy residues 3 to 23 (LLIV…GRFL), 36 to 56 (VSFS…GASA), 76 to 96 (FLFD…SSLV), 113 to 133 (FMCY…GDNF), 136 to 156 (LFLG…FWFT), 178 to 198 (LALG…STIF), 218 to 238 (ITLI…QIGL), 250 to 270 (TPVS…FMIA), 283 to 303 (LIVI…TGIL), 319 to 339 (LGYM…FHLM), 340 to 360 (NHAF…HAMS), 375 to 395 (FPLT…FPFL), 425 to 445 (VSVL…FLVP), 461 to 481 (IPMA…GYLA), and 618 to 638 (SGSV…FVTF).

The protein belongs to the complex I subunit 5 family.

It localises to the mitochondrion inner membrane. It catalyses the reaction a ubiquinone + NADH + 5 H(+)(in) = a ubiquinol + NAD(+) + 4 H(+)(out). Core subunit of the mitochondrial membrane respiratory chain NADH dehydrogenase (Complex I) that is believed to belong to the minimal assembly required for catalysis. Complex I functions in the transfer of electrons from NADH to the respiratory chain. The immediate electron acceptor for the enzyme is believed to be ubiquinone. This Triticum aestivum (Wheat) protein is NADH-ubiquinone oxidoreductase chain 5 (ND5).